The chain runs to 287 residues: MAGAKEIRSKIASVQNTQKITKAMEMVAASKMRKSQDRMAASRPYAETMRKVIGHLAHGNLEYKHLYLEDRDVKRVGYLVVSTDRGLCGGLNINLFKKLLAEMKTWTDKGVQCDLAMIGSKGVSFFNSVGGNVVAQVTGMGDNPSLSELIGPVKVMLQAYDEGRLDKLYIVSNKFINTMSQVPTISQLLPLPASDDDDLKHKSWDYLYEPDPKALLDTLLRRYVESQVYQGVVENLASEQAARMVAMKAATDNGGSLIKELQLVYNKARQASITQELTEIVSGAAAV.

The protein belongs to the ATPase gamma chain family. F-type ATPases have 2 components, CF(1) - the catalytic core - and CF(0) - the membrane proton channel. CF(1) has five subunits: alpha(3), beta(3), gamma(1), delta(1), epsilon(1). CF(0) has three main subunits: a, b and c.

The protein resides in the cell inner membrane. Functionally, produces ATP from ADP in the presence of a proton gradient across the membrane. The gamma chain is believed to be important in regulating ATPase activity and the flow of protons through the CF(0) complex. The polypeptide is ATP synthase gamma chain (Shigella boydii serotype 4 (strain Sb227)).